The primary structure comprises 114 residues: T cell receptor beta variable 19 (114 aa).

A signal peptide spans 1–21 (MSNQVLCCVVLCLLGANTVDG). The 93-residue stretch at 22-114 (GITQSPKYLF…TAFYLCASSI (93 aa)) folds into the Ig-like domain. N-linked (GlcNAc...) asparagine glycosylation occurs at N37. An intrachain disulfide couples C42 to C110.

In terms of assembly, alpha-beta TR is a heterodimer composed of an alpha and beta chain; disulfide-linked. The alpha-beta TR is associated with the transmembrane signaling CD3 coreceptor proteins to form the TR-CD3 (TcR or TCR). The assembly of alpha-beta TR heterodimers with CD3 occurs in the endoplasmic reticulum where a single alpha-beta TR heterodimer associates with one CD3D-CD3E heterodimer, one CD3G-CD3E heterodimer and one CD247 homodimer forming a stable octameric structure. CD3D-CD3E and CD3G-CD3E heterodimers preferentially associate with TR alpha and TR beta chains, respectively. The association of the CD247 homodimer is the last step of TcR assembly in the endoplasmic reticulum and is required for transport to the cell surface. As to quaternary structure, (Microbial infection) Interacts with Staphylococcus aureus enterotoxin type B/SEB.

The protein resides in the cell membrane. In terms of biological role, v region of the variable domain of T cell receptor (TR) beta chain that participates in the antigen recognition. Alpha-beta T cell receptors are antigen specific receptors which are essential to the immune response and are present on the cell surface of T lymphocytes. Recognize peptide-major histocompatibility (MH) (pMH) complexes that are displayed by antigen presenting cells (APC), a prerequisite for efficient T cell adaptive immunity against pathogens. Binding of alpha-beta TR to pMH complex initiates TR-CD3 clustering on the cell surface and intracellular activation of LCK that phosphorylates the ITAM motifs of CD3G, CD3D, CD3E and CD247 enabling the recruitment of ZAP70. In turn ZAP70 phosphorylates LAT, which recruits numerous signaling molecules to form the LAT signalosome. The LAT signalosome propagates signal branching to three major signaling pathways, the calcium, the mitogen-activated protein kinase (MAPK) kinase and the nuclear factor NF-kappa-B (NF-kB) pathways, leading to the mobilization of transcription factors that are critical for gene expression and essential for T cell growth and differentiation. The T cell repertoire is generated in the thymus, by V-(D)-J rearrangement. This repertoire is then shaped by intrathymic selection events to generate a peripheral T cell pool of self-MH restricted, non-autoaggressive T cells. Post-thymic interaction of alpha-beta TR with the pMH complexes shapes TR structural and functional avidity. This is T cell receptor beta variable 19 from Homo sapiens (Human).